The sequence spans 153 residues: UPF0266 membrane protein SG1324 (153 aa).

The next 3 membrane-spanning stretches (helical) occupy residues 6–26 (IGLVIMIVIALLFAVFDEFIV), 46–66 (LDGLIFIVLLLILLYKNITTD), and 68–88 (KVMTSTLILFLGLMVIYLAYI).

The protein belongs to the UPF0266 family.

It localises to the cell inner membrane. The polypeptide is UPF0266 membrane protein SG1324 (Sodalis glossinidius (strain morsitans)).